Reading from the N-terminus, the 888-residue chain is Probable disease resistance protein At5g63020 (888 aa).

Residues 22–66 are a coiled coil; that stretch reads LNRNGDYIHGLEENLTALQRALEQIEQRREDLLRKILSEERRGLQ. The NB-ARC domain occupies 139–442; sequence AERVDAARVE…GEGFIDRNKG (304 aa). An ATP-binding site is contributed by 181 to 188; that stretch reads GMGGVGKT. LRR repeat units follow at residues 512–533, 534–555, 558–580, 582–604, and 605–627; these read VARR…PESP, QLIT…FFRL, MLVV…ISEC, SLQY…VELR, and KLLY…SGLT.

This sequence belongs to the disease resistance NB-LRR family.

In terms of biological role, probable disease resistance protein. The sequence is that of Probable disease resistance protein At5g63020 from Arabidopsis thaliana (Mouse-ear cress).